A 1273-amino-acid chain; its full sequence is Ribulose bisphosphate carboxylase small subunit, chloroplastic (1273 aa).

Residues 1–134 constitute a chloroplast transit peptide; it reads MPFDRQPLLS…AVLPFTSEKD (134 aa). 7 propeptides span residues 269–278, 412–421, 556–565, 699–708, 844–853, 987–996, and 1131–1140; these read GMAAMTGEKD and GMAAMTGEKE.

This sequence belongs to the RuBisCO small chain family. Heterohexadecamer of 8 large and 8 small subunits. Eight small subunits are processed from a large polyprotein. All start with the same sequence but there is more heterogeneity at the C-terminus.

It is found in the plastid. The protein localises to the chloroplast. Its function is as follows. RuBisCO catalyzes two reactions: the carboxylation of D-ribulose 1,5-bisphosphate, the primary event in carbon dioxide fixation, as well as the oxidative fragmentation of the pentose substrate. Both reactions occur simultaneously and in competition at the same active site. Although the small subunit is not catalytic it is essential for maximal activity. In Euglena gracilis, this protein is Ribulose bisphosphate carboxylase small subunit, chloroplastic.